A 1229-amino-acid chain; its full sequence is Receptor-type adenylate cyclase GRESAG 4.3 (1229 aa).

Topologically, residues 1 to 24 are cytoplasmic; that stretch reads MIARVCRLTKHSKPPHLPITLTTP. Residues 25–45 traverse the membrane as a helical segment; it reads TLFLVVLVLLQLHPICVLVNV. Topologically, residues 46 to 845 are extracellular; that stretch reads DDGGGVTVKA…PNGNALTPAQ (800 aa). 5 N-linked (GlcNAc...) asparagine glycosylation sites follow: Asn-77, Asn-84, Asn-626, Asn-693, and Asn-768. A helical membrane pass occupies residues 846–866; the sequence is LAGVVGGSLFVVALAICLSVL. Topologically, residues 867 to 1229 are cytoplasmic; the sequence is ACFTLRGTRD…SNDLSDMIRV (363 aa). The region spanning 889–1043 is the Guanylate cyclase domain; it reads TLIFTDIESS…RTSNMAARTE (155 aa). Asp-894 and Asp-937 together coordinate Mg(2+).

The protein belongs to the adenylyl cyclase class-3 family. It depends on Mg(2+) as a cofactor.

It localises to the membrane. It catalyses the reaction ATP = 3',5'-cyclic AMP + diphosphate. Its function is as follows. Could act as a receptor for an unknown ligand. The protein is Receptor-type adenylate cyclase GRESAG 4.3 (GRESAG 4.3) of Trypanosoma brucei brucei.